A 390-amino-acid polypeptide reads, in one-letter code: Cell division protein FtsZ (390 aa).

GTP contacts are provided by residues 21-25 (GGGNN), 108-110 (GTG), Glu139, Arg143, and Asp187. Positions 315–390 (FDDKPTSHGR…EERRSRRTRR (76 aa)) are disordered. The segment covering 326–360 (SGSTGFGTSVNTSSNATSKDESFTSNSSNAQATDS) has biased composition (polar residues). A compositionally biased stretch (basic and acidic residues) spans 361–384 (VSERTHTTKEDDIPSFIRNREERR).

It belongs to the FtsZ family. As to quaternary structure, homodimer. Polymerizes to form a dynamic ring structure in a strictly GTP-dependent manner. Interacts directly with several other division proteins.

The protein resides in the cytoplasm. Its function is as follows. Essential cell division protein that forms a contractile ring structure (Z ring) at the future cell division site. The regulation of the ring assembly controls the timing and the location of cell division. One of the functions of the FtsZ ring is to recruit other cell division proteins to the septum to produce a new cell wall between the dividing cells. Binds GTP and shows GTPase activity. This chain is Cell division protein FtsZ, found in Staphylococcus aureus (strain NCTC 8325 / PS 47).